A 220-amino-acid chain; its full sequence is ATP phosphoribosyltransferase (220 aa).

This sequence belongs to the ATP phosphoribosyltransferase family. Short subfamily. In terms of assembly, heteromultimer composed of HisG and HisZ subunits.

It is found in the cytoplasm. The enzyme catalyses 1-(5-phospho-beta-D-ribosyl)-ATP + diphosphate = 5-phospho-alpha-D-ribose 1-diphosphate + ATP. It functions in the pathway amino-acid biosynthesis; L-histidine biosynthesis; L-histidine from 5-phospho-alpha-D-ribose 1-diphosphate: step 1/9. Catalyzes the condensation of ATP and 5-phosphoribose 1-diphosphate to form N'-(5'-phosphoribosyl)-ATP (PR-ATP). Has a crucial role in the pathway because the rate of histidine biosynthesis seems to be controlled primarily by regulation of HisG enzymatic activity. The sequence is that of ATP phosphoribosyltransferase from Janthinobacterium sp. (strain Marseille) (Minibacterium massiliensis).